A 416-amino-acid chain; its full sequence is Formyl-CoA:oxalate CoA-transferase (416 aa).

Residues 17–18 (QS), R38, 72–75 (LNTK), 96–98 (NFH), H104, and 137–140 (KAYE) contribute to the CoA site. The Nucleophile role is filled by D169. 248-250 (GGQ) is a substrate binding site. 273 to 275 (QEQ) is a CoA binding site.

The protein belongs to the CoA-transferase III family. Frc subfamily. In terms of assembly, homodimer.

It carries out the reaction formyl-CoA + oxalate = oxalyl-CoA + formate. It participates in metabolic intermediate degradation; oxalate degradation; CO(2) and formate from oxalate: step 1/2. Functionally, involved in the catabolism of oxalate and in the adapatation to low pH via the induction of the oxalate-dependent acid tolerance response (ATR). Catalyzes the transfer of the CoA moiety from formyl-CoA to oxalate. This Escherichia coli O6:H1 (strain CFT073 / ATCC 700928 / UPEC) protein is Formyl-CoA:oxalate CoA-transferase.